Consider the following 559-residue polypeptide: POU domain protein 1 (559 aa).

The 75-residue stretch at 259–333 folds into the POU-specific domain; sequence EDLPSSDDLE…LLQKWLHEAD (75 aa). The segment at residues 351–410 is a DNA-binding region (homeobox); that stretch reads KRKKRTSIEANVKSILESSFMKLSKPSAQDISSLAEKLSLEKEVVRVWFCNRRQKEKRIT.

This sequence belongs to the POU transcription factor family.

The protein resides in the nucleus. This Dugesia japonica (Planarian) protein is POU domain protein 1 (POU1).